Consider the following 347-residue polypeptide: Ribosomal RNA small subunit methyltransferase H (347 aa).

Residues 47 to 49 (GGY), aspartate 64, phenylalanine 91, aspartate 114, and glutamine 121 contribute to the S-adenosyl-L-methionine site. The tract at residues 291 to 347 (PAVKGAVGPTAEEEERNPRARSAKLRAGIRTENPPLEDDLSLFGLPKLPETNELARS) is disordered.

This sequence belongs to the methyltransferase superfamily. RsmH family.

It localises to the cytoplasm. It catalyses the reaction cytidine(1402) in 16S rRNA + S-adenosyl-L-methionine = N(4)-methylcytidine(1402) in 16S rRNA + S-adenosyl-L-homocysteine + H(+). Its function is as follows. Specifically methylates the N4 position of cytidine in position 1402 (C1402) of 16S rRNA. This is Ribosomal RNA small subunit methyltransferase H from Brucella anthropi (strain ATCC 49188 / DSM 6882 / CCUG 24695 / JCM 21032 / LMG 3331 / NBRC 15819 / NCTC 12168 / Alc 37) (Ochrobactrum anthropi).